The chain runs to 413 residues: Hibernation-specific plasma protein HP-55 (413 aa).

The N-terminal stretch at 1–24 (MPSSISWGLLLLAALSCLGPGSLA) is a signal peptide. Gln-25 is modified (pyrrolidone carboxylic acid). N-linked (GlcNAc...) asparagine glycans are attached at residues Asn-65, Asn-102, Asn-165, and Asn-266. Positions 368-387 (GGTVLGAEAMLQAPIMKFDR) are RCL.

The protein belongs to the serpin family. Plasma proteins HP-20, HP-25, HP-27 and HP-55 form a 140 kDa complex via disulfide bonds in the plasma. The N-terminus is blocked. Plasma; synthesized in the liver.

The protein resides in the secreted. Its function is as follows. Protease inhibitor. The polypeptide is Hibernation-specific plasma protein HP-55 (Tamias sibiricus (Siberian chipmunk)).